Here is a 305-residue protein sequence, read N- to C-terminus: tRNA pseudouridine synthase B (305 aa).

Asp48 serves as the catalytic Nucleophile.

Belongs to the pseudouridine synthase TruB family. Type 1 subfamily.

The enzyme catalyses uridine(55) in tRNA = pseudouridine(55) in tRNA. In terms of biological role, responsible for synthesis of pseudouridine from uracil-55 in the psi GC loop of transfer RNAs. This is tRNA pseudouridine synthase B from Stutzerimonas stutzeri (strain A1501) (Pseudomonas stutzeri).